The sequence spans 423 residues: Serine hydroxymethyltransferase 2 (423 aa).

(6S)-5,6,7,8-tetrahydrofolate-binding positions include Leu-121 and 125–127; that span reads GHL. Lys-230 is modified (N6-(pyridoxal phosphate)lysine). A (6S)-5,6,7,8-tetrahydrofolate-binding site is contributed by 356–358; sequence SPF.

This sequence belongs to the SHMT family. In terms of assembly, homodimer. Pyridoxal 5'-phosphate serves as cofactor.

The protein resides in the cytoplasm. The enzyme catalyses (6R)-5,10-methylene-5,6,7,8-tetrahydrofolate + glycine + H2O = (6S)-5,6,7,8-tetrahydrofolate + L-serine. It participates in one-carbon metabolism; tetrahydrofolate interconversion. Its pathway is amino-acid biosynthesis; glycine biosynthesis; glycine from L-serine: step 1/1. Functionally, catalyzes the reversible interconversion of serine and glycine with tetrahydrofolate (THF) serving as the one-carbon carrier. This reaction serves as the major source of one-carbon groups required for the biosynthesis of purines, thymidylate, methionine, and other important biomolecules. Also exhibits THF-independent aldolase activity toward beta-hydroxyamino acids, producing glycine and aldehydes, via a retro-aldol mechanism. This is Serine hydroxymethyltransferase 2 from Pectobacterium atrosepticum (strain SCRI 1043 / ATCC BAA-672) (Erwinia carotovora subsp. atroseptica).